A 397-amino-acid polypeptide reads, in one-letter code: Major capsid protein (397 aa).

The tract at residues 1–24 (MAAPDPYKPGKYNDPAGGVESSIG) is disordered.

Its subcellular location is the virion. Functionally, assembles to form an icosahedral capsid. In Pseudomonas phage KPP21, this protein is Major capsid protein.